Here is a 102-residue protein sequence, read N- to C-terminus: Small ribosomal subunit protein eS24 (102 aa).

Belongs to the eukaryotic ribosomal protein eS24 family.

This Methanococcus maripaludis (strain C7 / ATCC BAA-1331) protein is Small ribosomal subunit protein eS24.